A 464-amino-acid polypeptide reads, in one-letter code: Cysteine--tRNA ligase (464 aa).

Residue Cys-28 participates in Zn(2+) binding. Residues Pro-30–His-40 carry the 'HIGH' region motif. Residues Cys-205, His-230, and Glu-234 each contribute to the Zn(2+) site. A 'KMSKS' region motif is present at residues Lys-263–Ser-267. Lys-266 lines the ATP pocket.

Belongs to the class-I aminoacyl-tRNA synthetase family. Requires Zn(2+) as cofactor.

It localises to the cytoplasm. It catalyses the reaction tRNA(Cys) + L-cysteine + ATP = L-cysteinyl-tRNA(Cys) + AMP + diphosphate. The protein is Cysteine--tRNA ligase of Ignicoccus hospitalis (strain KIN4/I / DSM 18386 / JCM 14125).